The chain runs to 304 residues: UDP-3-O-acyl-N-acetylglucosamine deacetylase (304 aa).

Positions 78, 237, and 241 each coordinate Zn(2+). His-264 functions as the Proton donor in the catalytic mechanism.

Belongs to the LpxC family. The cofactor is Zn(2+).

It catalyses the reaction a UDP-3-O-[(3R)-3-hydroxyacyl]-N-acetyl-alpha-D-glucosamine + H2O = a UDP-3-O-[(3R)-3-hydroxyacyl]-alpha-D-glucosamine + acetate. The protein operates within glycolipid biosynthesis; lipid IV(A) biosynthesis; lipid IV(A) from (3R)-3-hydroxytetradecanoyl-[acyl-carrier-protein] and UDP-N-acetyl-alpha-D-glucosamine: step 2/6. In terms of biological role, catalyzes the hydrolysis of UDP-3-O-myristoyl-N-acetylglucosamine to form UDP-3-O-myristoylglucosamine and acetate, the committed step in lipid A biosynthesis. In Legionella pneumophila (strain Lens), this protein is UDP-3-O-acyl-N-acetylglucosamine deacetylase.